We begin with the raw amino-acid sequence, 141 residues long: Large ribosomal subunit protein uL11 (141 aa).

This sequence belongs to the universal ribosomal protein uL11 family. As to quaternary structure, part of the ribosomal stalk of the 50S ribosomal subunit. Interacts with L10 and the large rRNA to form the base of the stalk. L10 forms an elongated spine to which L12 dimers bind in a sequential fashion forming a multimeric L10(L12)X complex. One or more lysine residues are methylated.

Functionally, forms part of the ribosomal stalk which helps the ribosome interact with GTP-bound translation factors. In Geobacillus kaustophilus (strain HTA426), this protein is Large ribosomal subunit protein uL11.